We begin with the raw amino-acid sequence, 172 residues long: Large ribosomal subunit protein uL10 (172 aa).

The protein belongs to the universal ribosomal protein uL10 family. Part of the ribosomal stalk of the 50S ribosomal subunit. The N-terminus interacts with L11 and the large rRNA to form the base of the stalk. The C-terminus forms an elongated spine to which L12 dimers bind in a sequential fashion forming a multimeric L10(L12)X complex.

Forms part of the ribosomal stalk, playing a central role in the interaction of the ribosome with GTP-bound translation factors. This chain is Large ribosomal subunit protein uL10, found in Acidothermus cellulolyticus (strain ATCC 43068 / DSM 8971 / 11B).